Consider the following 417-residue polypeptide: Dibenzothiophene monooxygenase (417 aa).

The tract at residues 19 to 125 is helical N-terminus; that stretch reads DPVAVARGLA…LYTQIAQNNW (107 aa). FMN-binding positions include Tyr-96, 129–134, 159–163, Arg-282, 369–370, and His-391; these read NASSEN, KHFCS, and AR. The central beta-barrel N-terminus stretch occupies residues 126–234; sequence WTGNASSENN…VEPDEVLGAP (109 aa). Residues 131 to 142 form a lid loop region; sequence SSENNSHELDVK. A helical C-terminus region spans residues 235 to 409; the sequence is NAFVLAFIQS…DVGKHTLNGQ (175 aa).

Belongs to the DszC flavin monooxygenase family. As to quaternary structure, homotetramer.

Its subcellular location is the cytoplasm. The catalysed reaction is dibenzothiophene + 2 FMNH2 + 2 O2 = dibenzothiophene 5,5-dioxide + 2 FMN + 2 H2O + 2 H(+). It catalyses the reaction dibenzothiophene + FMNH2 + O2 = dibenzothiophene 5-oxide + FMN + H2O + H(+). The enzyme catalyses dibenzothiophene 5-oxide + FMNH2 + O2 = dibenzothiophene 5,5-dioxide + FMN + H2O + H(+). The protein operates within sulfur metabolism; dibenzothiophene degradation. Its function is as follows. Catalyzes the first step of the '4S' desulfurization pathway that removes covalently bound sulfur from dibenzothiophene (DBT) without breaking carbon-carbon bonds. Sulfur dioxygenase which converts DBT to DBT-sulfone (DBTO2 or DBT 5,5-dioxide) in a stepwise manner. The protein is Dibenzothiophene monooxygenase of Rhodococcus erythropolis (Arthrobacter picolinophilus).